We begin with the raw amino-acid sequence, 244 residues long: Kallikrein-6 (244 aa).

An N-terminal signal peptide occupies residues 1–16; sequence MKKLMVVLSLIAAAWA. A propeptide spans 17-21 (activation peptide); it reads EEQNK. One can recognise a Peptidase S1 domain in the interval 22 to 242; sequence LVHGGPCDKT…YTNWIQKTIQ (221 aa). Disulfide bonds link cysteine 28–cysteine 157, cysteine 47–cysteine 63, cysteine 131–cysteine 231, cysteine 138–cysteine 203, cysteine 168–cysteine 182, and cysteine 193–cysteine 218. Catalysis depends on charge relay system residues histidine 62 and aspartate 106. Asparagine 134 is a glycosylation site (N-linked (GlcNAc...) asparagine). Residue serine 197 is the Charge relay system of the active site.

In terms of processing, inactivated by autolytic cleavage after Arg-80. In fluids, highest levels found in milk of lactating women followed by cerebrospinal fluid, nipple aspirate fluid and breast cyst fluid. Also found in serum, seminal plasma and some amniotic fluids and breast tumor cytosolic extracts. Not detected in urine. At the tissue level, highest concentrations found in glandular tissues such as salivary glands followed by lung, colon, fallopian tube, placenta, breast, pituitary and kidney. Not detected in skin, spleen, bone, thyroid, heart, ureter, liver, muscle, endometrium, testis, pancreas, seminal vesicle, ovary, adrenals and prostate. In brain, detected in gray matter neurons (at protein level). Colocalizes with pathological inclusions such as Lewy bodies and glial cytoplasmic inclusions. Overexpressed in primary breast tumors but not expressed in metastatic tumors.

The protein resides in the secreted. Its subcellular location is the nucleus. The protein localises to the nucleolus. It is found in the cytoplasm. It localises to the mitochondrion. The protein resides in the microsome. Its activity is regulated as follows. Inhibited by a range of serine protease inhibitors including soybean trypsin inhibitor, benzamidine and serpins. Activated by a range of glycosaminoglycans including chondroitin sulfate, dermatan sulfate, heparan sulfate and heparin. Its function is as follows. Serine protease which exhibits a preference for Arg over Lys in the substrate P1 position and for Ser or Pro in the P2 position. Shows activity against amyloid precursor protein, myelin basic protein, gelatin, casein and extracellular matrix proteins such as fibronectin, laminin, vitronectin and collagen. Degrades alpha-synuclein and prevents its polymerization, indicating that it may be involved in the pathogenesis of Parkinson disease and other synucleinopathies. May be involved in regulation of axon outgrowth following spinal cord injury. Tumor cells treated with a neutralizing KLK6 antibody migrate less than control cells, suggesting a role in invasion and metastasis. This chain is Kallikrein-6 (KLK6), found in Homo sapiens (Human).